The primary structure comprises 681 residues: DNA-directed RNA polymerase subunit beta' (681 aa).

The Zn(2+) site is built by cysteine 69, cysteine 71, cysteine 87, and cysteine 90. Mg(2+)-binding residues include aspartate 489, aspartate 491, and aspartate 493.

It belongs to the RNA polymerase beta' chain family. RpoC1 subfamily. In plastids the minimal PEP RNA polymerase catalytic core is composed of four subunits: alpha, beta, beta', and beta''. When a (nuclear-encoded) sigma factor is associated with the core the holoenzyme is formed, which can initiate transcription. Mg(2+) is required as a cofactor. Requires Zn(2+) as cofactor.

The protein localises to the plastid. Its subcellular location is the chloroplast. It catalyses the reaction RNA(n) + a ribonucleoside 5'-triphosphate = RNA(n+1) + diphosphate. In terms of biological role, DNA-dependent RNA polymerase catalyzes the transcription of DNA into RNA using the four ribonucleoside triphosphates as substrates. This is DNA-directed RNA polymerase subunit beta' from Atropa belladonna (Belladonna).